Here is a 923-residue protein sequence, read N- to C-terminus: Protocadherin gamma-B4 (923 aa).

The signal sequence occupies residues 1–30 (MGSGAGELGRAERLPVLFLFLLSLFCPALC). Cadherin domains lie at 31-133 (EQIR…TPKF), 134-242 (TQNS…APVF), 243-345 (SQDI…APEV), 346-450 (IFQS…APVF), 451-560 (SQSS…APRV), and 568-673 (DGSA…LPDI). At 31–689 (EQIRYRIPEE…SDLEAELQFY (659 aa)) the chain is on the extracellular side. N-linked (GlcNAc...) asparagine glycans are attached at residues Asn-417 and Asn-543. Residues 690–710 (LVVALALISVLFLVAMILAIA) traverse the membrane as a helical segment. Topologically, residues 711 to 923 (LRLRRSSSPA…KKKSGKKEKK (213 aa)) are cytoplasmic. 2 disordered regions span residues 797–832 (SHQQ…WPNN) and 893–923 (ATLT…KEKK). Over residues 913-923 (NKKKSGKKEKK) the composition is skewed to basic residues.

It is found in the cell membrane. In terms of biological role, potential calcium-dependent cell-adhesion protein. May be involved in the establishment and maintenance of specific neuronal connections in the brain. The chain is Protocadherin gamma-B4 (PCDHGB4) from Pan troglodytes (Chimpanzee).